A 718-amino-acid chain; its full sequence is DNA ligase (718 aa).

NAD(+) is bound by residues 44–48 (DADYD), 93–94 (SL), and Glu-127. Lys-129 serves as the catalytic N6-AMP-lysine intermediate. NAD(+) contacts are provided by Arg-150, Glu-186, Lys-302, and Lys-326. 4 residues coordinate Zn(2+): Cys-432, Cys-435, Cys-456, and Cys-462. The BRCT domain occupies 640–718 (TAGSPVAGKT…EDEWLALISG (79 aa)).

This sequence belongs to the NAD-dependent DNA ligase family. LigA subfamily. Mg(2+) is required as a cofactor. Requires Mn(2+) as cofactor.

It catalyses the reaction NAD(+) + (deoxyribonucleotide)n-3'-hydroxyl + 5'-phospho-(deoxyribonucleotide)m = (deoxyribonucleotide)n+m + AMP + beta-nicotinamide D-nucleotide.. In terms of biological role, DNA ligase that catalyzes the formation of phosphodiester linkages between 5'-phosphoryl and 3'-hydroxyl groups in double-stranded DNA using NAD as a coenzyme and as the energy source for the reaction. It is essential for DNA replication and repair of damaged DNA. This Rhizobium etli (strain ATCC 51251 / DSM 11541 / JCM 21823 / NBRC 15573 / CFN 42) protein is DNA ligase.